We begin with the raw amino-acid sequence, 174 residues long: ATP-dependent protease subunit HslV (174 aa).

The active site involves threonine 2. Glycine 157, aspartate 160, and threonine 163 together coordinate Na(+).

It belongs to the peptidase T1B family. HslV subfamily. In terms of assembly, a double ring-shaped homohexamer of HslV is capped on each side by a ring-shaped HslU homohexamer. The assembly of the HslU/HslV complex is dependent on binding of ATP.

The protein resides in the cytoplasm. The enzyme catalyses ATP-dependent cleavage of peptide bonds with broad specificity.. With respect to regulation, allosterically activated by HslU binding. Functionally, protease subunit of a proteasome-like degradation complex believed to be a general protein degrading machinery. This chain is ATP-dependent protease subunit HslV, found in Aliivibrio fischeri (strain MJ11) (Vibrio fischeri).